Reading from the N-terminus, the 219-residue chain is Ribose-5-phosphate isomerase A (219 aa).

Residues 28–31, 81–84, and 94–97 each bind substrate; these read SGST, DGAD, and KGGG. E103 serves as the catalytic Proton acceptor. K121 is a binding site for substrate.

It belongs to the ribose 5-phosphate isomerase family. As to quaternary structure, homodimer.

The enzyme catalyses aldehydo-D-ribose 5-phosphate = D-ribulose 5-phosphate. The protein operates within carbohydrate degradation; pentose phosphate pathway; D-ribose 5-phosphate from D-ribulose 5-phosphate (non-oxidative stage): step 1/1. Its function is as follows. Catalyzes the reversible conversion of ribose-5-phosphate to ribulose 5-phosphate. The protein is Ribose-5-phosphate isomerase A of Actinobacillus pleuropneumoniae serotype 5b (strain L20).